Reading from the N-terminus, the 82-residue chain is MSGTTGERPFSDIVTSIRYWVIHSITIPALFIAGWLFVSTGLAYDVFGTPRPDEYYTQARQELPIVNNRFEAKKQVEQLIQK.

Residues 21–35 (VIHSITIPALFIAGW) form a helical membrane-spanning segment. Histidine 23 is a binding site for heme.

Belongs to the PsbE/PsbF family. Heterodimer of an alpha subunit and a beta subunit. PSII is composed of 1 copy each of membrane proteins PsbA, PsbB, PsbC, PsbD, PsbE, PsbF, PsbH, PsbI, PsbJ, PsbK, PsbL, PsbM, PsbT, PsbX, PsbY, PsbZ, Psb30/Ycf12, peripheral proteins PsbO, CyanoQ (PsbQ), PsbU, PsbV and a large number of cofactors. It forms dimeric complexes. Heme b is required as a cofactor.

The protein resides in the cellular thylakoid membrane. Its function is as follows. This b-type cytochrome is tightly associated with the reaction center of photosystem II (PSII). PSII is a light-driven water:plastoquinone oxidoreductase that uses light energy to abstract electrons from H(2)O, generating O(2) and a proton gradient subsequently used for ATP formation. It consists of a core antenna complex that captures photons, and an electron transfer chain that converts photonic excitation into a charge separation. This chain is Cytochrome b559 subunit alpha, found in Nostoc sp. (strain PCC 7120 / SAG 25.82 / UTEX 2576).